We begin with the raw amino-acid sequence, 178 residues long: ATP synthase subunit b, chloroplastic (178 aa).

The helical transmembrane segment at leucine 34–serine 50 threads the bilayer.

This sequence belongs to the ATPase B chain family. F-type ATPases have 2 components, F(1) - the catalytic core - and F(0) - the membrane proton channel. F(1) has five subunits: alpha(3), beta(3), gamma(1), delta(1), epsilon(1). F(0) has four main subunits: a(1), b(1), b'(1) and c(10-14). The alpha and beta chains form an alternating ring which encloses part of the gamma chain. F(1) is attached to F(0) by a central stalk formed by the gamma and epsilon chains, while a peripheral stalk is formed by the delta, b and b' chains.

It localises to the plastid. The protein localises to the chloroplast thylakoid membrane. Functionally, f(1)F(0) ATP synthase produces ATP from ADP in the presence of a proton or sodium gradient. F-type ATPases consist of two structural domains, F(1) containing the extramembraneous catalytic core and F(0) containing the membrane proton channel, linked together by a central stalk and a peripheral stalk. During catalysis, ATP synthesis in the catalytic domain of F(1) is coupled via a rotary mechanism of the central stalk subunits to proton translocation. In terms of biological role, component of the F(0) channel, it forms part of the peripheral stalk, linking F(1) to F(0). This is ATP synthase subunit b, chloroplastic from Ochrosphaera neapolitana.